Reading from the N-terminus, the 89-residue chain is MSRTVFCCKLKQEAEGLEKQPFPGELGKKVFNEVSKQAWNMWLSHQTMLINEYRLNLIEARAREFLKEEMQKYFFGEGSDKPSGYKEIK.

Belongs to the Fe(2+)-trafficking protein family.

Could be a mediator in iron transactions between iron acquisition and iron-requiring processes, such as synthesis and/or repair of Fe-S clusters in biosynthetic enzymes. The protein is Probable Fe(2+)-trafficking protein of Legionella pneumophila (strain Lens).